The following is a 179-amino-acid chain: Large ribosomal subunit protein uL5 (179 aa).

Belongs to the universal ribosomal protein uL5 family. In terms of assembly, part of the 50S ribosomal subunit; part of the 5S rRNA/L5/L18/L25 subcomplex. Contacts the 5S rRNA and the P site tRNA. Forms a bridge to the 30S subunit in the 70S ribosome.

Functionally, this is one of the proteins that bind and probably mediate the attachment of the 5S RNA into the large ribosomal subunit, where it forms part of the central protuberance. In the 70S ribosome it contacts protein S13 of the 30S subunit (bridge B1b), connecting the 2 subunits; this bridge is implicated in subunit movement. Contacts the P site tRNA; the 5S rRNA and some of its associated proteins might help stabilize positioning of ribosome-bound tRNAs. The polypeptide is Large ribosomal subunit protein uL5 (Pseudomonas paraeruginosa (strain DSM 24068 / PA7) (Pseudomonas aeruginosa (strain PA7))).